The following is a 37-amino-acid chain: Brevinin-2DYe (37 aa).

Cys-31 and Cys-37 are oxidised to a cystine.

As to expression, expressed by the skin glands.

Its subcellular location is the secreted. Its function is as follows. Antimicrobial peptide. Active against the Gram-positive bacterium S.aureus (MIC=15 uM) and the Gram-negative bacterium E.coli (MIC=30 uM). This chain is Brevinin-2DYe, found in Rana dybowskii (Dybovsky's frog).